The sequence spans 727 residues: ATP-dependent RNA helicase Ddx1 (727 aa).

In terms of domain architecture, Helicase ATP-binding spans 2 to 428 (TAFEEFGVLP…AERLMHFPTW (427 aa)). 46–53 (AETGSGKT) lines the ATP pocket. One can recognise a B30.2/SPRY domain in the interval 69 to 246 (RDLEEGKAGK…MQFNFGKTDF (178 aa)). Residues 370–373 (DEAD) carry the DEAD box motif. Residues 483–676 (TLSQAVKLLK…QVDKTMDVPV (194 aa)) form the Helicase C-terminal domain.

The protein belongs to the DEAD box helicase family. DDX1 subfamily.

The enzyme catalyses ATP + H2O = ADP + phosphate + H(+). Its function is as follows. Acts as an ATP-dependent RNA helicase, able to unwind both RNA-RNA and RNA-DNA duplexes. Possesses 5' single-stranded RNA overhang nuclease activity. The chain is ATP-dependent RNA helicase Ddx1 (Ddx1) from Drosophila melanogaster (Fruit fly).